The chain runs to 492 residues: 2,3-bisphosphoglycerate-independent phosphoglycerate mutase (492 aa).

Residues aspartate 11 and serine 61 each contribute to the Mn(2+) site. Serine 61 serves as the catalytic Phosphoserine intermediate. Substrate contacts are provided by residues histidine 118, 147–148, arginine 177, arginine 183, 248–251, and lysine 321; these read RD and RNDR. Residues aspartate 387, histidine 391, aspartate 428, histidine 429, and histidine 446 each coordinate Mn(2+).

Belongs to the BPG-independent phosphoglycerate mutase family. In terms of assembly, monomer. Mn(2+) is required as a cofactor.

The enzyme catalyses (2R)-2-phosphoglycerate = (2R)-3-phosphoglycerate. Its pathway is carbohydrate degradation; glycolysis; pyruvate from D-glyceraldehyde 3-phosphate: step 3/5. Catalyzes the interconversion of 2-phosphoglycerate and 3-phosphoglycerate. The protein is 2,3-bisphosphoglycerate-independent phosphoglycerate mutase of Helicobacter acinonychis (strain Sheeba).